Reading from the N-terminus, the 517-residue chain is Ladinin-1 (517 aa).

The interval 1-401 is disordered; that stretch reads MAVSRKDWSA…SASMKLPDNT (401 aa). Ser38 is modified (phosphoserine). A compositionally biased stretch (polar residues) spans 48-58; it reads LSQNGDRQASA. 4 positions are modified to phosphoserine: Ser64, Ser78, Ser121, and Ser123. Positions 120 to 131 are enriched in polar residues; it reads NSLSPVQATQKP. 2 stretches are compositionally biased toward basic and acidic residues: residues 134–151 and 161–174; these read SKKE…REQR and LVGR…KGVP. 8 SEK repeats span residues 203-205, 209-211, 215-217, 221-223, 227-229, 239-241, 257-259, and 269-271; these read SEK. The segment at 203 to 271 is 8 X SEK repeats; sequence SEKVLASEKT…IFEKALASEK (69 aa). Residues 219-233 show a composition bias toward basic and acidic residues; that stretch reads AVSEKRNSSEKKSVL. A phosphoserine mark is found at Ser347, Ser356, and Ser394. Residues 355–373 are compositionally biased toward polar residues; the sequence is SSPTQRTYSSSLKRSSPRT. Residue Arg424 is modified to Omega-N-methylarginine. Positions 481-517 are disordered; sequence RTQESGDQDPQEAQKASSATERTQWGQKSDSSLDAEV. Ser485 is modified (phosphoserine). A compositionally biased stretch (polar residues) spans 494 to 517; sequence QKASSATERTQWGQKSDSSLDAEV.

Its subcellular location is the secreted. The protein resides in the extracellular space. It is found in the extracellular matrix. It localises to the basement membrane. Functionally, anchoring filament protein which is a component of the basement membrane zone. This Homo sapiens (Human) protein is Ladinin-1 (LAD1).